The chain runs to 230 residues: Ion-translocating oxidoreductase complex subunit E (230 aa).

6 consecutive transmembrane segments (helical) span residues 18-38 (ALVQ…ITNA), 39-59 (LGLG…VSLI), 69-89 (IPVF…LMNA), 93-113 (GLYL…IIIG), 124-144 (VLPA…VLVV), and 182-202 (SFLL…LIAL).

The protein belongs to the NqrDE/RnfAE family. In terms of assembly, the complex is composed of six subunits: RnfA, RnfB, RnfC, RnfD, RnfE and RnfG.

It is found in the cell inner membrane. Functionally, part of a membrane-bound complex that couples electron transfer with translocation of ions across the membrane. This Vibrio parahaemolyticus serotype O3:K6 (strain RIMD 2210633) protein is Ion-translocating oxidoreductase complex subunit E.